Consider the following 249-residue polypeptide: DNA repair protein RecO (249 aa).

It belongs to the RecO family.

Functionally, involved in DNA repair and RecF pathway recombination. This chain is DNA repair protein RecO, found in Polaromonas sp. (strain JS666 / ATCC BAA-500).